The primary structure comprises 274 residues: MVGRRALIVLAHSERTSFNYAMKEAAAAALKKKGWEVVESDLYAMNFNPIISRKDITGKLKDPANFQYPAESVLAYKEGHLSPDIVAEQKKLEAADLVIFQFPLQWFGVPAILKGWFERVFIGEFAYTYAAMYDKGPFRSKKAVLSITTGGSGSMYSLQGIHGDMNVILWPIQSGILHFCGFQVLEPQLTYSIGHTPADARIQILEGWKKRLENIWDETPLYFAPSSLFDLNFQAGFLMKKEVQDEEKNKKFGLSVGHHLGKSIPTDNQIKARK.

FAD is bound by residues H12, 18–19 (FN), and Q67. Phosphoserine is present on S82. 104 to 107 (LQWF) serves as a coordination point for FAD. 126 to 128 (AYT) contributes to the substrate binding site. FAD contacts are provided by residues 148 to 151 (TTGG), Y156, and R201. The interval 225-274 (PSSLFDLNFQAGFLMKKEVQDEEKNKKFGLSVGHHLGKSIPTDNQIKARK) is important for apoenzyme conformational stability. Residues K250 and K251 each participate in a glycyl lysine isopeptide (Lys-Gly) (interchain with G-Cter in SUMO2) cross-link.

It belongs to the NAD(P)H dehydrogenase (quinone) family. As to quaternary structure, homodimer. Interacts with PDLIM4 isoform 2; this interaction stabilizes PDLIM4 isoform 2 in response to oxidative stress and protects it from ubiquitin-independent degradation by the core 20S proteasome. Interacts with TP73 (via SAM domain); this interaction is NADH-dependent, stabilizes TP73 in response to oxidative stress and protects it from ubiquitin-independent degradation by the 20S proteasome. Interacts with TP53; this interaction is NADH-dependent, stabilizes TP53 in response to oxidative stress and protects it from ubiquitin-independent degradation by the 20S proteasome. FAD is required as a cofactor.

The protein localises to the cytoplasm. It localises to the cytosol. It catalyses the reaction a quinone + NADH + H(+) = a quinol + NAD(+). It carries out the reaction a quinone + NADPH + H(+) = a quinol + NADP(+). The enzyme catalyses ubiquinone-10 + NADH + H(+) = ubiquinol-10 + NAD(+). The catalysed reaction is menadione + NADH + H(+) = menadiol + NAD(+). With respect to regulation, inhibited by dicoumarol. Flavin-containing quinone reductase that catalyzes two-electron reduction of quinones to hydroquinones using either NADH or NADPH as electron donors. In a ping-pong kinetic mechanism, the electrons are sequentially transferred from NAD(P)H to flavin cofactor and then from reduced flavin to the quinone, bypassing the formation of semiquinone and reactive oxygen species. Regulates cellular redox state primarily through quinone detoxification. Reduces components of plasma membrane redox system such as coenzyme Q and vitamin quinones, producing antioxidant hydroquinone forms. In the process may function as superoxide scavenger to prevent hydroquinone oxidation and facilitate excretion. Alternatively, can activate quinones and their derivatives by generating redox reactive hydroquinones with DNA cross-linking antitumor potential. Acts as a gatekeeper of the core 20S proteasome known to degrade proteins with unstructured regions. Upon oxidative stress, interacts with tumor suppressors TP53 and TP73 in a NADH-dependent way and inhibits their ubiquitin-independent degradation by the 20S proteasome. This Homo sapiens (Human) protein is NAD(P)H dehydrogenase [quinone] 1.